A 469-amino-acid chain; its full sequence is MIGFKSFFMRTIIFQVLAILLLWGLLVAWVKYWYYPDMEKYFDNQQRIVAAGIANILDETGTDNIDYRGIIKTIEGMYIDSINNGMQDEIDYHPLFVVYDRDNRVLYSSQTQGEPLRLPPSVLSGSVNYAGANWHLAGSWKEKRQYRVIVGESFNDRTTLFGNPADVPLLGILAAIIVTLLFTAYFSLRPLRQIARTISDRQPGNLSPINVSEQYQEIRPVVMEVNKLMARIDAANQREKRFMADAAHELRTPIAAVLAQLHLLTQVTEQQERREIIGDMQQGLDRAASLSRQLINLAKLEAEDFPLKIEAVDIYAEIGKCIAQHVPYALEKDVELSLDGSEDVVVSTDRRALIAIFTNLLDNALKYAPPGSRIEANIRSLAPLGCYITLRDNGPGVSEEHRSRLFERFYRVPGTQQTGSGLGLAIARNLADKIGAQLRVTEGLDDRGIGFIIDLPESYRPQTESEPRP.

2 consecutive transmembrane segments (helical) span residues 12-32 and 167-187; these read IIFQ…WVKY and VPLL…AYFS. A Histidine kinase domain is found at 245–459; it reads DAAHELRTPI…GFIIDLPESY (215 aa). A Phosphohistidine; by autocatalysis modification is found at H248.

Its subcellular location is the cell inner membrane. It catalyses the reaction ATP + protein L-histidine = ADP + protein N-phospho-L-histidine.. Its function is as follows. Member of the two-component regulatory system RssA/RssB involved in regulation of swarming motility which has been shown to be inhibited by saturated fatty acids. RssA/RssB regulates cellular fatty acid composition, hemolysin production and cell surface topography. RssA/RssB negatively regulates the activity of SlhBA. It can also act as a negative regulator for the control of the swarming initiation. The polypeptide is Swarming motility regulation sensor protein RssA (rssA) (Serratia marcescens).